The primary structure comprises 312 residues: Pyridoxal kinase (312 aa).

At Met1 the chain carries N-acetylmethionine. Residues Ser12 and Thr47 each contribute to the pyridoxal 5'-phosphate site. Pyridoxamine is bound by residues Ser12 and Thr47. Ser59 carries the phosphoserine modification. Asp113 contributes to the K(+) binding site. Tyr127 contributes to the pyridoxal 5'-phosphate binding site. Thr148 contributes to the K(+) binding site. Asn150 lines the ADP pocket. Residue Asn150 coordinates ATP. At Ser164 the chain carries Phosphoserine. Position 186 (Thr186) interacts with K(+). 186-187 (TS) is a binding site for ADP. 186-187 (TS) lines the ATP pocket. Phosphoserine is present on Ser213. Residues 223–226 (MHKV) and 233–234 (TG) contribute to the ADP site. Residues 223–226 (MHKV) and 233–234 (TG) contribute to the ATP site. Residue 232-235 (GTGD) coordinates pyridoxal 5'-phosphate. Pyridoxamine is bound at residue Asp235. Catalysis depends on Asp235, which acts as the Proton acceptor. Ser285 carries the phosphoserine modification.

It belongs to the pyridoxine kinase family. As to quaternary structure, homodimer. Zn(2+) is required as a cofactor. Requires Mg(2+) as cofactor. In terms of tissue distribution, ubiquitous.

It localises to the cytoplasm. It is found in the cytosol. It carries out the reaction pyridoxal + ATP = pyridoxal 5'-phosphate + ADP + H(+). It catalyses the reaction pyridoxamine + ATP = pyridoxamine 5'-phosphate + ADP + H(+). The enzyme catalyses pyridoxine + ATP = pyridoxine 5'-phosphate + ADP + H(+). It participates in cofactor metabolism; pyridoxal 5'-phosphate salvage; pyridoxal 5'-phosphate from pyridoxal: step 1/1. The protein operates within cofactor metabolism; pyridoxal 5'-phosphate salvage; pyridoxine 5'-phosphate from pyridoxine: step 1/1. Its pathway is cofactor metabolism; pyridoxal 5'-phosphate salvage; pyridoxamine 5'-phosphate from pyridoxamine: step 1/1. Activated by K(+). Activity is increased in the presence of Na(+). In terms of biological role, catalyzes the phosphorylation of the dietary vitamin B6 vitamers pyridoxal (PL), pyridoxine (PN) and pyridoxamine (PM) to form pyridoxal 5'-phosphate (PLP), pyridoxine 5'-phosphate (PNP) and pyridoxamine 5'-phosphate (PMP), respectively. PLP is the active form of vitamin B6, and acts as a cofactor for over 140 different enzymatic reactions. The sequence is that of Pyridoxal kinase (PDXK) from Ovis aries (Sheep).